The chain runs to 237 residues: UPF0280 protein Mpal_1292 (237 aa).

The protein belongs to the UPF0280 family.

The sequence is that of UPF0280 protein Mpal_1292 from Methanosphaerula palustris (strain ATCC BAA-1556 / DSM 19958 / E1-9c).